A 475-amino-acid polypeptide reads, in one-letter code: Bifunctional protein HldE (475 aa).

Positions M1 to T320 are ribokinase. N196–E199 is a binding site for ATP. Residue D265 is part of the active site. The cytidylyltransferase stretch occupies residues F346–L475.

This sequence in the N-terminal section; belongs to the carbohydrate kinase PfkB family. The protein in the C-terminal section; belongs to the cytidylyltransferase family. In terms of assembly, homodimer.

It carries out the reaction D-glycero-beta-D-manno-heptose 7-phosphate + ATP = D-glycero-beta-D-manno-heptose 1,7-bisphosphate + ADP + H(+). The enzyme catalyses D-glycero-beta-D-manno-heptose 1-phosphate + ATP + H(+) = ADP-D-glycero-beta-D-manno-heptose + diphosphate. It functions in the pathway nucleotide-sugar biosynthesis; ADP-L-glycero-beta-D-manno-heptose biosynthesis; ADP-L-glycero-beta-D-manno-heptose from D-glycero-beta-D-manno-heptose 7-phosphate: step 1/4. Its pathway is nucleotide-sugar biosynthesis; ADP-L-glycero-beta-D-manno-heptose biosynthesis; ADP-L-glycero-beta-D-manno-heptose from D-glycero-beta-D-manno-heptose 7-phosphate: step 3/4. In terms of biological role, catalyzes the phosphorylation of D-glycero-D-manno-heptose 7-phosphate at the C-1 position to selectively form D-glycero-beta-D-manno-heptose-1,7-bisphosphate. Catalyzes the ADP transfer from ATP to D-glycero-beta-D-manno-heptose 1-phosphate, yielding ADP-D-glycero-beta-D-manno-heptose. The polypeptide is Bifunctional protein HldE (Marinomonas sp. (strain MWYL1)).